We begin with the raw amino-acid sequence, 276 residues long: MELRAFVEITRPHNCALAGLVGVLGSMVALGSVPEGKILILVFLVVSLGCAGGNTINDYFDYEIDRINRPERPLPRGAMDRRTALWYSLFLFAVGLALALLISLKAFAFALLAYITMFLYAWKLKPLPFIGNIAVAALTGVTPLYGAIAVGKIGLAGTLAVCAFLVNVAREIVKDIEDVEGDLKKGAKTLPIILGRRKAAYVAAFFGVATVIASFLPVKAGVGVGYYAMVPVDLIILYAVYLILRNQDEKTAHRSQLLLKASIFLAVFAFLIAALM.

The next 8 membrane-spanning stretches (helical) occupy residues 12–34 (PHNCALAGLVGVLGSMVALGSVP), 38–60 (ILILVFLVVSLGCAGGNTINDYF), 84–104 (ALWYSLFLFAVGLALALLISL), 107–127 (FAFALLAYITMFLYAWKLKPL), 146–166 (GAIAVGKIGLAGTLAVCAFLV), 202–222 (VAAFFGVATVIASFLPVKAGV), 224–244 (VGYYAMVPVDLIILYAVYLIL), and 256–276 (QLLLKASIFLAVFAFLIAALM).

It belongs to the UbiA prenyltransferase family. DGGGP synthase subfamily. It depends on Mg(2+) as a cofactor.

Its subcellular location is the cell membrane. It catalyses the reaction sn-3-O-(geranylgeranyl)glycerol 1-phosphate + (2E,6E,10E)-geranylgeranyl diphosphate = 2,3-bis-O-(geranylgeranyl)-sn-glycerol 1-phosphate + diphosphate. It participates in membrane lipid metabolism; glycerophospholipid metabolism. In terms of biological role, prenyltransferase that catalyzes the transfer of the geranylgeranyl moiety of geranylgeranyl diphosphate (GGPP) to the C2 hydroxyl of (S)-3-O-geranylgeranylglyceryl phosphate (GGGP). This reaction is the second ether-bond-formation step in the biosynthesis of archaeal membrane lipids. The polypeptide is Digeranylgeranylglyceryl phosphate synthase (Thermococcus gammatolerans (strain DSM 15229 / JCM 11827 / EJ3)).